Here is a 355-residue protein sequence, read N- to C-terminus: Protein-glutamate methylesterase/protein-glutamine glutaminase (355 aa).

Positions 3 to 121 (NVLVVEDSPV…HPDHEATARK (119 aa)) constitute a Response regulatory domain. Position 54 is a 4-aspartylphosphate (aspartate 54). In terms of domain architecture, CheB-type methylesterase spans 154–348 (PLLNRVAPAR…AALTNLVAER (195 aa)). Catalysis depends on residues serine 170, histidine 197, and aspartate 290.

This sequence belongs to the CheB family. Post-translationally, phosphorylated by CheA. Phosphorylation of the N-terminal regulatory domain activates the methylesterase activity.

It is found in the cytoplasm. The catalysed reaction is [protein]-L-glutamate 5-O-methyl ester + H2O = L-glutamyl-[protein] + methanol + H(+). The enzyme catalyses L-glutaminyl-[protein] + H2O = L-glutamyl-[protein] + NH4(+). Involved in chemotaxis. Part of a chemotaxis signal transduction system that modulates chemotaxis in response to various stimuli. Catalyzes the demethylation of specific methylglutamate residues introduced into the chemoreceptors (methyl-accepting chemotaxis proteins or MCP) by CheR. Also mediates the irreversible deamidation of specific glutamine residues to glutamic acid. This chain is Protein-glutamate methylesterase/protein-glutamine glutaminase, found in Nitrosospira multiformis (strain ATCC 25196 / NCIMB 11849 / C 71).